A 1877-amino-acid chain; its full sequence is Protein TIC 214 (1877 aa).

Helical transmembrane passes span Ile-18–Gly-38, Phe-67–Leu-87, Pro-90–His-110, Leu-127–Leu-147, Val-175–Ile-195, and Ile-224–Ile-244. The span at Phe-249–Arg-258 shows a compositional bias: basic and acidic residues. A disordered region spans residues Phe-249 to Glu-308. 2 stretches are compositionally biased toward acidic residues: residues Gly-259–Thr-271 and Gly-284–Glu-298. A compositionally biased stretch (basic and acidic residues) spans Asp-299 to Glu-308.

Belongs to the TIC214 family. As to quaternary structure, part of the Tic complex.

The protein resides in the plastid. The protein localises to the chloroplast inner membrane. Its function is as follows. Involved in protein precursor import into chloroplasts. May be part of an intermediate translocation complex acting as a protein-conducting channel at the inner envelope. The protein is Protein TIC 214 of Eucalyptus globulus subsp. globulus (Tasmanian blue gum).